A 92-amino-acid chain; its full sequence is MSASDFEERVVTIPLRDARAEPNHKRADKAMILIREHLAKHFSVDEDAVRLDPSINEAAWARGRANTPSKIRVRAARFEEEGEAIVEAETAE.

An N-acetylserine modification is found at S2.

Belongs to the eukaryotic ribosomal protein eL31 family. In terms of assembly, part of the 50S ribosomal subunit.

Functionally, binds to the 23S rRNA. Located at the polypeptide exit tunnel on the outside of the subunit. This Haloarcula marismortui (strain ATCC 43049 / DSM 3752 / JCM 8966 / VKM B-1809) (Halobacterium marismortui) protein is Large ribosomal subunit protein eL31 (rpl31e).